The following is a 124-amino-acid chain: uncharacterized protein (124 aa).

Disordered stretches follow at residues 1-26 (MRRQ…QPRP) and 100-124 (IPGQ…GLRR). The segment covering 102 to 115 (GQQSRNCSLPQTKY) has biased composition (polar residues).

The protein localises to the cytoplasm. The protein resides in the cytoskeleton. Its subcellular location is the cilium basal body. This is an uncharacterized protein from Rattus norvegicus (Rat).